The sequence spans 784 residues: Alpha-catulin (784 aa).

The tract at residues 35–247 (IKTKSIEQTL…LLLTASKTYL (213 aa)) is vinculin/alpha-catenin homology 1 (VH1) region. The stretch at 387–414 (ASGLEVTVERLNRRLKDLSKQLQIVAME) forms a coiled coil. Residues 552-696 (PRPGKHGTTQ…MVKSPTVGKT (145 aa)) form a vinculin/alpha-catenin homology 2 (VH2) region region. Residues 737–784 (GSVNGRTGADGERTSRESTVWRRTPSIRRAAPPTSSHLSANNSSSIHI) are disordered. Residues 745 to 756 (ADGERTSRESTV) show a composition bias toward basic and acidic residues. Residues 771 to 784 (SSHLSANNSSSIHI) are compositionally biased toward low complexity.

This sequence belongs to the vinculin/alpha-catenin family. Interacts with slo-1 (via C-terminus); the interaction is required for localization of slo-1 to dense bodies in body wall muscle cells. Interacts (via N-terminus) with dystrophin complex member dyb-1 (via C-terminus); the interaction is required for localization of the dystrophin complex and ctn-1 near dense bodies in muscle cells. As to expression, expressed in body wall muscles, vulval muscles, stomatointestinal cells and pharyngeal muscle cells. Expressed in enteric muscles, nerve ring neurons and in the ventral nerve cord.

Its subcellular location is the cytoplasm. Functionally, required for slo-1 potassium ion channel clustering at presynaptic terminals and in egg-laying muscles; clustering of slo-1 mediates the intoxicating and sedatory effects of ethanol on worms. Required for slo-1 localization to dense bodies in body wall muscle cells. Maintains the localization of the dystrophin complex near muscle cell dense bodies via its interaction with complex member dyb-1 which is required for slo-1 localization in muscle while slo-1 localization in neurons is independent of the dystrophin complex. The sequence is that of Alpha-catulin from Caenorhabditis elegans.